A 357-amino-acid polypeptide reads, in one-letter code: MAAAAKPKNLSLVVHGPGDLRLENYPIPEPGPNEVLLRMHSVGICGSDVHYWEEGRIGNFIVKKPMVLGHEASGTVEKVGSLVKHLKPGDRVAIEPGVPRENDEFCKSGRYNLSPSIFFCATPPDDGNLCRFYKHNAAFCYKLPDNVTFEEGALIEPLSVGIHACRRGGVTLGHRVLVCGAGPIGVVSLLVAKAMGAAQVVVTDLSAPRLSKAKEIGADLVLQISKESPQEIAGKVEGLLGCKPEVTIECTGAEASIQAGIYATRSGGTLVLVGLGSEMTTIPLLHAAVREVDIKGVFRYCNTWPVAISMLASKSVNIKPLVTHRFPLEKALEAFETFKKGLGLKIMLKCDPNDQNP.

At Ala2 the chain carries N-acetylalanine. Cys45 is a binding site for Zn(2+). Tyr51 provides a ligand contact to substrate. Positions 70 and 71 each coordinate Zn(2+). Glu156 contacts substrate. Residues Ile184, Asp204, and Arg209 each contribute to the NAD(+) site. 2 positions are modified to phosphoserine: Ser211 and Ser225. NAD(+)-binding positions include 273–275 (VGL) and 297–299 (VFR). The substrate site is built by Arg299 and Tyr300.

The protein belongs to the zinc-containing alcohol dehydrogenase family. As to quaternary structure, homotetramer. It depends on Zn(2+) as a cofactor.

It localises to the mitochondrion membrane. It is found in the cell projection. The protein localises to the cilium. Its subcellular location is the flagellum. The enzyme catalyses xylitol + NAD(+) = D-xylulose + NADH + H(+). It carries out the reaction L-iditol + NAD(+) = keto-L-sorbose + NADH + H(+). The catalysed reaction is keto-D-fructose + NADH + H(+) = D-sorbitol + NAD(+). Its function is as follows. Polyol dehydrogenase that catalyzes the reversible NAD(+)-dependent oxidation of various sugar alcohols. Is active with xylitol, L-iditol and D-sorbitol (D-glucitol) as substrates, leading to the C2-oxidized products D-xylulose, L-sorbose and D-fructose, respectively. Is a key enzyme in the polyol pathway that interconverts glucose and fructose via sorbitol, which constitutes an important alternate route for glucose metabolism. May play a role in sperm motility by using sorbitol as an alternative energy source for sperm motility. The sequence is that of Sorbitol dehydrogenase (SORD) from Macaca fascicularis (Crab-eating macaque).